A 460-amino-acid chain; its full sequence is MKGQDVILCDGGRHFSYKVLPRVVIVGRPNVGKSTLFNRLLGRRRSITSNTSGVTRDSIEETVILRGFPLRLVDTSGFTVFSEKKASRQHIDTLVLEQTYKSIQCADKILLVLDGTCESAEDEEVIQYLRPYWGKLIAAVNKTEGGEEVHYNYARYGFSTLICVSAEHGRNIDALERAIIQNLFSVDERRELPKDDVVRLAIVGKPNTGKSTLMNYLMRRTVSLVCDRAGTTRDVVTGHVEFKQYKFIIADTAGIRKRQKVYESIEYYSVIRAISILNAVDIVLYIVDARDGFSEQDKKIVSQISKRNLGVIFLLNKWDLLEGSTSLIAKKKRDVRTAFGKMNFVPVVPVSAKTGHGISDALHCVCKIFAQLNTKVETSALNTALKDWVTSYPPPRKYGHVSLKYLVQVSVRPIEFLLFANRPDRIPENYVRFLQNRIREDLGLDSIPVKLTIRKNCRKR.

EngA-type G domains are found at residues 21–187 (PRVV…FSVD) and 198–373 (VRLA…AQLN). GTP contacts are provided by residues 27–34 (GRPNVGKS), 74–78 (DTSGF), 141–144 (NKTE), 204–211 (GKPNTGKS), 251–255 (DTAGI), and 316–319 (NKWD). One can recognise a KH-like domain in the interval 374–457 (TKVETSALNT…PVKLTIRKNC (84 aa)).

The protein belongs to the TRAFAC class TrmE-Era-EngA-EngB-Septin-like GTPase superfamily. EngA (Der) GTPase family. In terms of assembly, associates with the 50S ribosomal subunit.

GTPase that plays an essential role in the late steps of ribosome biogenesis. The protein is GTPase Der of Treponema pallidum subsp. pallidum (strain SS14).